A 94-amino-acid chain; its full sequence is MFDIKEDQNGVVVKVRVQPRASKNSLAGEMEGALKVRLTAPPVDGAANEACCKFFGELFGVAKSKVEIIAGHTGRNKLVHIQGVTEKQARFILK.

Belongs to the UPF0235 family.

The sequence is that of UPF0235 protein Dred_0717 from Desulforamulus reducens (strain ATCC BAA-1160 / DSM 100696 / MI-1) (Desulfotomaculum reducens).